Reading from the N-terminus, the 452-residue chain is Tripartite motif-containing protein 49C (452 aa).

The segment at 15 to 56 adopts an RING-type zinc-finger fold; that stretch reads CPLCMNYFIDPVTIDCGHSFCRPCFYLNWQDIPFLVQCSECT. A B box-type zinc finger spans residues 88–129; that stretch reads SEEQMCGTHRETKKIFCEVDRSLLCLLCSSSQEHRYHRHRPI. Zn(2+)-binding residues include Cys-93, His-96, Cys-115, and His-121. Residues 269–452 form the B30.2/SPRY domain; that stretch reads ELSAGPITGL…LRPIFCCIHF (184 aa).

In Homo sapiens (Human), this protein is Tripartite motif-containing protein 49C (TRIM49C).